The sequence spans 177 residues: Ribosome maturation factor RimP (177 aa).

The protein belongs to the RimP family.

It localises to the cytoplasm. Its function is as follows. Required for maturation of 30S ribosomal subunits. The chain is Ribosome maturation factor RimP from Mycobacterium marinum (strain ATCC BAA-535 / M).